A 339-amino-acid chain; its full sequence is UDP-3-O-acylglucosamine N-acyltransferase (339 aa).

Residue His-248 is the Proton acceptor of the active site.

Belongs to the transferase hexapeptide repeat family. LpxD subfamily. Homotrimer.

It catalyses the reaction a UDP-3-O-[(3R)-3-hydroxyacyl]-alpha-D-glucosamine + a (3R)-hydroxyacyl-[ACP] = a UDP-2-N,3-O-bis[(3R)-3-hydroxyacyl]-alpha-D-glucosamine + holo-[ACP] + H(+). The protein operates within bacterial outer membrane biogenesis; LPS lipid A biosynthesis. Catalyzes the N-acylation of UDP-3-O-acylglucosamine using 3-hydroxyacyl-ACP as the acyl donor. Is involved in the biosynthesis of lipid A, a phosphorylated glycolipid that anchors the lipopolysaccharide to the outer membrane of the cell. The protein is UDP-3-O-acylglucosamine N-acyltransferase of Caulobacter vibrioides (strain NA1000 / CB15N) (Caulobacter crescentus).